Consider the following 348-residue polypeptide: 3',5'-cyclic-nucleotide phosphodiesterase (348 aa).

Mn(2+) is required as a cofactor.

The catalysed reaction is a nucleoside 3',5'-cyclic phosphate + H2O = a nucleoside 5'-phosphate + H(+). In terms of biological role, hydrolyzes cAMP to 5'-AMP and cGMP to 5'-GMP. Does not show phosphohydrolase activity toward various phosphatidylcholine and phosphorylated sugars. This chain is 3',5'-cyclic-nucleotide phosphodiesterase, found in Helicobacter pylori (strain ATCC 700392 / 26695) (Campylobacter pylori).